Reading from the N-terminus, the 276-residue chain is Mitochondrial outer membrane protein porin 1 (276 aa).

Belongs to the eukaryotic mitochondrial porin (TC 1.B.8.1) family. In terms of tissue distribution, expressed in shoot meristems, root meristematic zone, lateral roots, leaves, stigma and anthers.

Its subcellular location is the mitochondrion outer membrane. In terms of biological role, forms a channel through the mitochondrial outer membrane that allows diffusion of small hydrophilic molecules. The channel adopts an open conformation at low or zero membrane potential and a closed conformation at potentials above 30-40 mV. The open state has a weak anion selectivity whereas the closed state is cation-selective. Involved in plant development at reproductive stage, is important for pollen development and may regulate hydrogen peroxide generation during disease resistance. This is Mitochondrial outer membrane protein porin 1 (VDAC1) from Arabidopsis thaliana (Mouse-ear cress).